We begin with the raw amino-acid sequence, 184 residues long: dCTP deaminase (184 aa).

107–112 (KSTYAR) is a dCTP binding site. Glu133 acts as the Proton donor/acceptor in catalysis. Residues Gln152, Tyr166, and Gln176 each contribute to the dCTP site.

It belongs to the dCTP deaminase family. Homotrimer.

The enzyme catalyses dCTP + H2O + H(+) = dUTP + NH4(+). It functions in the pathway pyrimidine metabolism; dUMP biosynthesis; dUMP from dCTP (dUTP route): step 1/2. Its function is as follows. Catalyzes the deamination of dCTP to dUTP. This is dCTP deaminase from Acidiphilium cryptum (strain JF-5).